Here is a 488-residue protein sequence, read N- to C-terminus: Serine protease HTR4 (488 aa).

Residues 1–35 (MSRSKMSSQRLWAVRAQFLLLWLLLWAAPVPWAEA) form the signal peptide. Positions 40 to 118 (VSLPCPDACD…RAWLGTCGCA (79 aa)) constitute an IGFBP N-terminal domain. Disulfide bonds link C44–C70, C48–C72, C53–C73, C59–C76, C84–C98, and C92–C115. Positions 213–373 (GSGFIVSEDG…IPSDRIRQFL (161 aa)) are serine protease. Residues H229, D259, and S337 each act as charge relay system in the active site. One can recognise a PDZ domain in the interval 384 to 476 (KAPLQKKYLG…LSIIVLRGSQ (93 aa)).

It belongs to the peptidase S1C family.

The protein localises to the secreted. In terms of biological role, serine protease. In Rattus norvegicus (Rat), this protein is Serine protease HTR4 (Htra4).